A 351-amino-acid polypeptide reads, in one-letter code: Protein Wnt-2b-A (351 aa).

The signal sequence occupies residues 1-16; it reads MHFAYILILLILTPRV. 11 cysteine pairs are disulfide-bonded: cysteine 67-cysteine 78, cysteine 118-cysteine 126, cysteine 128-cysteine 148, cysteine 197-cysteine 211, cysteine 199-cysteine 206, cysteine 269-cysteine 300, cysteine 285-cysteine 295, cysteine 299-cysteine 339, cysteine 315-cysteine 330, cysteine 317-cysteine 327, and cysteine 322-cysteine 323. N-linked (GlcNAc...) asparagine glycosylation occurs at asparagine 77. The O-palmitoleoyl serine; by PORCN moiety is linked to residue serine 203.

Belongs to the Wnt family. In terms of processing, palmitoleoylation is required for efficient binding to frizzled receptors. Depalmitoleoylation leads to Wnt signaling pathway inhibition. Expressed maternally in both vegetal and animal blastomeres with enrichment in the animal hemisphere. Expressed zygotically near the prosencephalic-mesencephalic boundary of the developing brain in neurula and tailbud stages, and also in non-brain areas at tadpole stages.

The protein localises to the secreted. The protein resides in the extracellular space. It localises to the extracellular matrix. Its function is as follows. Ligand for members of the frizzled family of seven transmembrane receptors. Functions in the canonical Wnt/beta-catenin signaling pathway. The chain is Protein Wnt-2b-A (wnt2b-a) from Xenopus laevis (African clawed frog).